A 1578-amino-acid polypeptide reads, in one-letter code: Cilia- and flagella-associated protein 74 (1578 aa).

Over residues 1–14 (MEEPTVQFSDEDLV) the composition is skewed to acidic residues. 2 disordered regions span residues 1 to 21 (MEEP…PPMD) and 33 to 67 (EVER…TTKD). Basic and acidic residues predominate over residues 33 to 65 (EVERPSEGLEDEGSHSSAKKESKGAEKMRKSTT). Coiled-coil stretches lie at residues 103–156 (RQRM…QSKI) and 330–378 (KYLF…RRQH).

The protein belongs to the CFAP74 family.

It localises to the cytoplasm. The protein localises to the cytoskeleton. It is found in the cilium axoneme. Its subcellular location is the flagellum axoneme. Functionally, as part of the central apparatus of the cilium axoneme may play a role in cilium movement. May play an important role in sperm architecture and function. This chain is Cilia- and flagella-associated protein 74, found in Mus musculus (Mouse).